Consider the following 969-residue polypeptide: Alanine--tRNA ligase (969 aa).

The transit peptide at 1–8 (MIKTLLRR) directs the protein to the mitochondrion. 4 residues coordinate Zn(2+): His-616, His-620, Cys-735, and His-739.

Belongs to the class-II aminoacyl-tRNA synthetase family. In terms of assembly, monomer. The cofactor is Zn(2+).

It localises to the mitochondrion. It is found in the cytoplasm. It carries out the reaction tRNA(Ala) + L-alanine + ATP = L-alanyl-tRNA(Ala) + AMP + diphosphate. Its function is as follows. Catalyzes the attachment of alanine to tRNA(Ala) in a two-step reaction: alanine is first activated by ATP to form Ala-AMP and then transferred to the acceptor end of tRNA(Ala). Also edits incorrectly charged tRNA(Ala) via its editing domain. In Candida albicans (strain SC5314 / ATCC MYA-2876) (Yeast), this protein is Alanine--tRNA ligase.